Reading from the N-terminus, the 425-residue chain is Probable G-protein coupled receptor 63 (425 aa).

The Extracellular portion of the chain corresponds to 1-87; sequence MVVSGVLTAP…VFKSLNLAVQ (87 aa). N-linked (GlcNAc...) asparagine glycans are attached at residues Asn-22, Asn-34, and Asn-68. The helical transmembrane segment at 88 to 112 threads the bilayer; that stretch reads IILSAIMIFILFVSFLGNLVVCLMV. Topologically, residues 113-123 are cytoplasmic; it reads YQKAAMRSAIN. The helical transmembrane segment at 124-148 threads the bilayer; the sequence is ILLASLAFADMLLAVLNMPFALVTI. The Extracellular portion of the chain corresponds to 149-165; sequence LTTRWIFGKFFCRLSAM. Residues 166–190 form a helical membrane-spanning segment; the sequence is FFWLFVIEGVAILLIISIDRFLIIV. The Cytoplasmic segment spans residues 191-202; it reads QRQDKLNPYRAK. Residues 203 to 222 traverse the membrane as a helical segment; it reads VLIAVSWATAFSVAFPLAVG. Over 223–247 the chain is Extracellular; that stretch reads NPDLQIPSRAPQCVFGYTTNSGYQA. The chain crosses the membrane as a helical span at residues 248 to 272; the sequence is YVILISLISFFIPFLVILYSFMGIL. Residues 273-321 lie on the Cytoplasmic side of the membrane; that stretch reads NTLRHNALRIHSYPEGICLSQASKLGLMSLQRPFQMSIDMGFKTRAFTT. A helical transmembrane segment spans residues 322-345; the sequence is ILILFAVFIVCWAPFTTYSLVATF. The Extracellular segment spans residues 346 to 357; sequence SKHFYYQHNFFE. A helical transmembrane segment spans residues 358–379; that stretch reads ISTWLLWLCYLKSALNPLIYYW. The Cytoplasmic segment spans residues 380 to 425; it reads RIKKFHDACLDMMPKSFKFLPRLPGHTRRRIRPSAVYVCGEHRTVL.

It belongs to the G-protein coupled receptor 1 family. Brain specific.

The protein localises to the cell membrane. Orphan receptor. May play a role in brain function. This chain is Probable G-protein coupled receptor 63 (Gpr63), found in Mus musculus (Mouse).